Consider the following 316-residue polypeptide: MTVIDNHGVLAKDGELSEASARDYFELLKPRVMSLVVFTAFAGLVLAPGHIHPVLGTIAILCIAVGAGASGALNMWYDADIDAIMSRTANRPIPAGRIAPSEALAFGLVLSGFSVVILGLAVNWLSAGILAFTIFFYAVVYTMWLKRSTPQNIVIGGAAGAFPPMIGWACVTNSVTIESTVLFLIIFLWTPAHFWALALFKMRDYEAVGVPMLPNVAGERVTKHQIVAYAVLTAVCAVLPSFLGFASLGYGLVAAALGAIFIYCSIAVWRMPDGDLKMIPAKKLFGFSIFYLFAVFSALMIDRLAPVLVSHAGGWF.

A run of 9 helical transmembrane segments spans residues 32–52 (VMSLVVFTAFAGLVLAPGHIH), 53–73 (PVLGTIAILCIAVGAGASGAL), 93–113 (IPAGRIAPSEALAFGLVLSGF), 116–136 (VILGLAVNWLSAGILAFTIFF), 152–172 (NIVIGGAAGAFPPMIGWACVT), 180–200 (TVLFLIIFLWTPAHFWALALF), 221–241 (VTKHQIVAYAVLTAVCAVLPS), 252–271 (LVAAALGAIFIYCSIAVWRM), and 289–309 (IFYLFAVFSALMIDRLAPVLV).

This sequence belongs to the UbiA prenyltransferase family. Protoheme IX farnesyltransferase subfamily.

Its subcellular location is the cell inner membrane. It catalyses the reaction heme b + (2E,6E)-farnesyl diphosphate + H2O = Fe(II)-heme o + diphosphate. It participates in porphyrin-containing compound metabolism; heme O biosynthesis; heme O from protoheme: step 1/1. Its function is as follows. Converts heme B (protoheme IX) to heme O by substitution of the vinyl group on carbon 2 of heme B porphyrin ring with a hydroxyethyl farnesyl side group. The chain is Protoheme IX farnesyltransferase from Rhizobium johnstonii (strain DSM 114642 / LMG 32736 / 3841) (Rhizobium leguminosarum bv. viciae).